The sequence spans 480 residues: Molybdate-anion transporter (480 aa).

12 helical membrane passes run 1–21, 44–63, 78–98, 129–149, 177–197, 199–219, 274–294, 304–324, 339–359, 369–389, 401–421, and 441–461; these read MFVTAYFAVISLLALCVGLEL, ATFLRAYLLALWADWLQGPY, IAILYVCGLASCVLFAPFSGW, FVLIVGRILGGLSTSLLTTTF, TWNHGLAVGAGLVANLLAEWL, LGPVAPFLLAVPFLACCAWFV, VMLLGGVQALFESVLYIFIFL, SPLGIVFSCFMAASMVGSLLF, VLCVAVLMAFFSFFMLTFSTV, FLAFLLLELACGLYFPALNFL, SVLAWFRLPLHLLACLGLLAL, and FGGCAVMMLAALMAVVSLFTL.

The protein belongs to the major facilitator superfamily.

It localises to the cell membrane. Mediates high-affinity intracellular uptake of the rare oligo-element molybdenum. The protein is Molybdate-anion transporter (mfsd5) of Takifugu rubripes (Japanese pufferfish).